The sequence spans 637 residues: MHGLLLAATLLSLPFNAVAHVPPTTGLVRRGVDLDSFRLNERSQFKISEQVEKDSGVSALHSRNYVDVATRLVKRVAPKATFRLVDDHYIGDTGVGHVYFRQTINGVDVDNGDFNVNIGRNGRVFSYGNSFHTGDVPESNLRVKEDPSNPVQALHGALKALRIPIKAERAVAEATNEEDDEDFVLKGTSGALADPTAKLVYLMKNDGSLALTWRVETDIGDNWLLTYVDAEDTTKVHNVVDYVAHATYKVYRWGIADPTEGELEVISDPWNLRTSEFTWHGNGTTRFSTTIGNNGIAQSNPTGGSEYLNNYRPQPADLKFEYDYSPSMNPPSTYIDASITQLWYSANTYHDLLYMLGFNERSGNFETNNNNQGGKGNDYVILNAQDGSGTNNANFATPPDGRPGRMRMYIWTRANPPRDVCFEEGTVVHEYTHGLSNRLTGGPANSRCLNALESGGMGEGWSDFFATAVRLKPKDTRHTDYPKGAWVANNPRGVRQYVYSTNMTTNPLVYTTVNSLNQVHAIGTVWATILYEVLWNLIDKHGKNDGPTPKFRNGVPTDGKYLAMKLVLDGLALQPCNPNFVQARDAILDADKILTGGRNQCELWKGFAKRELGTGAKWDPRNRVGSTRVPVICRIFT.

A signal peptide spans 1-19; sequence MHGLLLAATLLSLPFNAVA. Positions 20 to 245 are excised as a propeptide; the sequence is HVPPTTGLVR…VHNVVDYVAH (226 aa). Residue asparagine 282 is glycosylated (N-linked (GlcNAc...) asparagine). Histidine 429 lines the Zn(2+) pocket. Glutamate 430 is an active-site residue. Histidine 433 contacts Zn(2+). An N-linked (GlcNAc...) asparagine glycan is attached at asparagine 502.

Belongs to the peptidase M36 family. Zn(2+) serves as cofactor.

It localises to the secreted. Functionally, secreted metalloproteinase that allows assimilation of proteinaceous substrates. In Uncinocarpus reesii (strain UAMH 1704), this protein is Extracellular metalloproteinase 10 (MEP10).